Here is a 526-residue protein sequence, read N- to C-terminus: MDFSSTVASQLYTGAILPESIVILTLIVVLVGDLIVGRARSGWIPYAAIAGLLGSVFALYLGWDNPHPVAFLGAFNSDNLSILFRGIIVLSTAFTIMMSVRYVERSGTALSEFICILLTATLGGMFLSGANELVMIFVSLEMLSISSYLLTGYMKRDPRSNEAALKYLLIGAASSAIFLYGVSLLYGLSGGKTILSEIALGFTDPQGGQSLALAIALVFAIAGIAFKISAVPFHQWTPDVYEGSPTPVVAFLSVGSKAAGFALAIRLLVTVFNPVSEEWHFIFTALAILSMVLGNVVALAQTSMKRMLAYSSIAQAGFVMIGLVAGTDAGYSSVIFYLLVYLFMNLGAFTCVILFSLRTGTDQIAEYAGLYQKDPLLTLGLSVCLLSLGGIPPLAGFFGKIYLFWAGWQAGLYGLVLLGLITSVISIYYYIRVIKMMVVKEPQEMSDSVRNYPAVTWTAVGMKPLQVGLVLSVIITSLAGILSNPLFVIADQSVTSTPMLQVANHPTEQVVAQVDSELVGVAIADH.

Helical transmembrane passes span 16–36, 43–63, 80–100, 107–127, 133–153, 168–188, 211–231, 245–265, 279–299, 307–327, 335–355, 379–399, 401–421, and 469–489; these read ILPE…DLIV, WIPY…YLGW, LSIL…MMSV, GTAL…GMFL, LVMI…LTGY, LLIG…LYGL, LALA…ISAV, PTPV…ALAI, WHFI…VVAL, MLAY…VAGT, IFYL…VILF, LGLS…GFFG, IYLF…LGLI, and LVLS…LFVI.

The protein belongs to the complex I subunit 2 family. NDH-1 can be composed of about 15 different subunits; different subcomplexes with different compositions have been identified which probably have different functions.

Its subcellular location is the cellular thylakoid membrane. It carries out the reaction a plastoquinone + NADH + (n+1) H(+)(in) = a plastoquinol + NAD(+) + n H(+)(out). It catalyses the reaction a plastoquinone + NADPH + (n+1) H(+)(in) = a plastoquinol + NADP(+) + n H(+)(out). Functionally, NDH-1 shuttles electrons from an unknown electron donor, via FMN and iron-sulfur (Fe-S) centers, to quinones in the respiratory and/or the photosynthetic chain. The immediate electron acceptor for the enzyme in this species is believed to be plastoquinone. Couples the redox reaction to proton translocation, and thus conserves the redox energy in a proton gradient. Cyanobacterial NDH-1 also plays a role in inorganic carbon-concentration. This is NAD(P)H-quinone oxidoreductase subunit 2 from Picosynechococcus sp. (strain ATCC 27264 / PCC 7002 / PR-6) (Agmenellum quadruplicatum).